A 167-amino-acid chain; its full sequence is E1B protein, small T-antigen (167 aa).

The interval 143-167 (GLDPVQEEEEEEENLRAGLDPSTEL) is disordered.

The protein belongs to the adenoviridae E1B 19 kDa protein family.

Its subcellular location is the host cell membrane. The protein localises to the host nucleus envelope. It localises to the host nucleus lamina. In terms of biological role, putative adenovirus Bcl-2 homolog that inhibits apoptosis induced by TNF or FAS pathways, as well as p53-mediated apoptosis. Without E1B 19K function, virus production is compromised because of premature death of host cell. Interacts with Bax protein in cell lysates. The sequence is that of E1B protein, small T-antigen from Human adenovirus F serotype 40 (HAdV-40).